The chain runs to 257 residues: tRNA pseudouridine synthase A (257 aa).

Asp-53 (nucleophile) is an active-site residue. Tyr-111 is a substrate binding site.

This sequence belongs to the tRNA pseudouridine synthase TruA family. As to quaternary structure, homodimer.

The enzyme catalyses uridine(38/39/40) in tRNA = pseudouridine(38/39/40) in tRNA. In terms of biological role, formation of pseudouridine at positions 38, 39 and 40 in the anticodon stem and loop of transfer RNAs. This is tRNA pseudouridine synthase A from Xanthomonas axonopodis pv. citri (strain 306).